We begin with the raw amino-acid sequence, 351 residues long: Glycerol-3-phosphate dehydrogenase 1-like protein (351 aa).

An NAD(+)-binding site is contributed by 12–17 (GSGNWG). Lys122 contacts substrate. Ala155 is a binding site for NAD(+). Lys206 acts as the Proton acceptor in catalysis. NAD(+)-binding residues include Arg271, Lys298, and Gln300. 271-272 (RN) provides a ligand contact to substrate.

It belongs to the NAD-dependent glycerol-3-phosphate dehydrogenase family. As to quaternary structure, interacts with SCN5A.

Its subcellular location is the cytoplasm. It carries out the reaction sn-glycerol 3-phosphate + NAD(+) = dihydroxyacetone phosphate + NADH + H(+). Its function is as follows. Plays a role in regulating cardiac sodium current; decreased enzymatic activity with resulting increased levels of glycerol 3-phosphate activating the DPD1L-dependent SCN5A phosphorylation pathway, may ultimately lead to decreased sodium current; cardiac sodium current may also be reduced due to alterations of NAD(H) balance induced by DPD1L. This Pongo abelii (Sumatran orangutan) protein is Glycerol-3-phosphate dehydrogenase 1-like protein (GPD1L).